Consider the following 368-residue polypeptide: Ferrochelatase (368 aa).

Fe cation contacts are provided by His209 and Glu290. The disordered stretch occupies residues 341–368; sequence ADLGGGREATGQAAERSRQRALALGAKQ.

Belongs to the ferrochelatase family.

Its subcellular location is the cytoplasm. It carries out the reaction heme b + 2 H(+) = protoporphyrin IX + Fe(2+). Its pathway is porphyrin-containing compound metabolism; protoheme biosynthesis; protoheme from protoporphyrin-IX: step 1/1. Its function is as follows. Catalyzes the ferrous insertion into protoporphyrin IX. This chain is Ferrochelatase, found in Nitrosococcus oceani (strain ATCC 19707 / BCRC 17464 / JCM 30415 / NCIMB 11848 / C-107).